Reading from the N-terminus, the 419-residue chain is L-rhamnose isomerase (419 aa).

Mn(2+) is bound by residues His-262, Asp-294, and Asp-296.

The protein belongs to the rhamnose isomerase family. As to quaternary structure, homotetramer. It depends on Mn(2+) as a cofactor.

It localises to the cytoplasm. The catalysed reaction is L-rhamnopyranose = L-rhamnulose. Its pathway is carbohydrate degradation; L-rhamnose degradation; glycerone phosphate from L-rhamnose: step 1/3. Catalyzes the interconversion of L-rhamnose and L-rhamnulose. The sequence is that of L-rhamnose isomerase from Shigella boydii serotype 4 (strain Sb227).